We begin with the raw amino-acid sequence, 471 residues long: Histidinol dehydrogenase (471 aa).

NAD(+)-binding residues include Tyr-139, Gln-204, and Asn-236. Thr-259, Gln-281, and His-284 together coordinate substrate. Zn(2+)-binding residues include Gln-281 and His-284. Catalysis depends on proton acceptor residues Glu-350 and His-351. Residues His-351, Asp-384, Glu-438, and His-443 each contribute to the substrate site. Asp-384 contributes to the Zn(2+) binding site. His-443 contributes to the Zn(2+) binding site.

It belongs to the histidinol dehydrogenase family. It depends on Zn(2+) as a cofactor.

It catalyses the reaction L-histidinol + 2 NAD(+) + H2O = L-histidine + 2 NADH + 3 H(+). Its pathway is amino-acid biosynthesis; L-histidine biosynthesis; L-histidine from 5-phospho-alpha-D-ribose 1-diphosphate: step 9/9. In terms of biological role, catalyzes the sequential NAD-dependent oxidations of L-histidinol to L-histidinaldehyde and then to L-histidine. The protein is Histidinol dehydrogenase of Bifidobacterium longum (strain NCC 2705).